A 3326-amino-acid chain; its full sequence is Deoxyribonuclease CdiA (3326 aa).

The segment at 36–342 is two-partner system transport domain (TPS); it reads TADGVLTSGG…ARGALTLTGS (307 aa). Residues 343–1396 form an FHA-1 region; it reads YAGAGSLYSD…ITVRTGTLTN (1054 aa). Residues 1397 to 1765 form a receptor binding domain (RBD) region; that stretch reads QREGLVVTES…QQLGSPSLTD (369 aa). Positions 1766–1951 are YP domain; the sequence is YPLPTSQSGL…LAQADKTNLQ (186 aa). The interval 1959-2097 is periplasmic FHA-1 repeat (pFR); the sequence is SVSLSAGGDI…AGGPLQLAAG (139 aa). The segment at 2125–2660 is FHA-2; it reads QGLVQSTVAS…SNRYDSKQTS (536 aa). The VENN CT cleavage motif motif lies at 3060–3063; that stretch reads VENN. Positions 3060 to 3326 are CT domain; that stretch reads VENNSLGDIA…DRNRQIGVIK (267 aa).

The protein in the N-terminal section; belongs to the CdiA toxin family. As to quaternary structure, the C-terminal (CT) domain interacts with cognate CdiI but not non-cognate CdiI from E.coli strain 536 / UPEC.

The protein resides in the target cell. It is found in the target cell cytoplasm. In terms of biological role, toxic component of a toxin-immunity protein module, which functions as a cellular contact-dependent growth inhibition (CDI) system. CDI modules allow bacteria to communicate with and inhibit the growth of closely related neighboring bacteria in a contact-dependent fashion. CDI is neutralized by its cognate immunity protein CdiI, but not by non-cognate CdiI from other bacteria. The C-terminal domain (CT) has strong DNase activity; this activity is inhibited by cognate CdiI. The CdiA protein is thought to be exported from the cell through the central lumen of CdiB, the other half of its two-partner system (TPS). The TPS domain probably remains associated with CdiB while the FHA-1 domain forms an extended filament with the receptor-binding domain (RBD) at its extremity; in the secretion arrested state the C-terminus of the RBD and YP domains form a hairpin-like structure as the FHA-2, PT and CT domains are periplasmic. The YP domain is probably responsible for this arrest at the point where it re-enters the host cell periplasm. Upon binding to a target cell outer membrane receptor a signal is transmitted to activate secretion. The filament elongates slightly, the rest of CdiA is secreted and the FHA-2 domain becomes stably associated with the target cell's outer membrane where it facilitates entry of the toxic CT domain into the target cell periplasm. From there the toxic CT domain is cleaved and gains access to the target cell cytoplasm via an inner membrane protein. This chain is Deoxyribonuclease CdiA, found in Dickeya dadantii (strain 3937) (Erwinia chrysanthemi (strain 3937)).